A 117-amino-acid polypeptide reads, in one-letter code: MIKGIGIDAVELSRIKPIVEKQGSFIQRVLTPNELTLFEKLSTKRQIEFLAGRFACKEAFSKAWGTGIGKVGLQDIEVLTEKTGAPYVANSPHNGKVFVSITHTETMAIAQIVLESE.

2 residues coordinate Mg(2+): Asp-8 and Glu-58.

It belongs to the P-Pant transferase superfamily. AcpS family. Mg(2+) serves as cofactor.

The protein resides in the cytoplasm. It carries out the reaction apo-[ACP] + CoA = holo-[ACP] + adenosine 3',5'-bisphosphate + H(+). Functionally, transfers the 4'-phosphopantetheine moiety from coenzyme A to a Ser of acyl-carrier-protein. The sequence is that of Holo-[acyl-carrier-protein] synthase from Enterococcus faecalis (strain ATCC 700802 / V583).